The chain runs to 307 residues: Beta-lactamase (307 aa).

The signal sequence occupies residues 1-26 (MKLWFSTLKLKKAAAVLLFSCVALAG). Cys27 carries N-palmitoyl cysteine lipidation. Cys27 carries the S-diacylglycerol cysteine lipid modification. Ser86 (acyl-ester intermediate) is an active-site residue. The Proton acceptor role is filled by Glu182. 248 to 250 (KTG) is a substrate binding site.

The protein belongs to the class-A beta-lactamase family. In terms of processing, large exopenicillinase is the primary secretion product; it can be converted to small exopenicillinase.

It is found in the cell membrane. The catalysed reaction is a beta-lactam + H2O = a substituted beta-amino acid. The protein is Beta-lactamase (penP) of Bacillus licheniformis.